A 200-amino-acid chain; its full sequence is Large ribosomal subunit protein uL4 (200 aa).

The tract at residues 42-65 is disordered; that stretch reads TRAQKTRSEVSGGGAKPWRQKGTG.

The protein belongs to the universal ribosomal protein uL4 family. Part of the 50S ribosomal subunit.

Its function is as follows. One of the primary rRNA binding proteins, this protein initially binds near the 5'-end of the 23S rRNA. It is important during the early stages of 50S assembly. It makes multiple contacts with different domains of the 23S rRNA in the assembled 50S subunit and ribosome. Functionally, forms part of the polypeptide exit tunnel. This Vibrio atlanticus (strain LGP32) (Vibrio splendidus (strain Mel32)) protein is Large ribosomal subunit protein uL4.